Here is a 100-residue protein sequence, read N- to C-terminus: Histone H3-like 2 (100 aa).

The interval 1–46 is disordered; the sequence is MARMKHTARMSTGGKAPRKQLASKALRKAPPPPTKGVKQPTTTTSG.

It belongs to the histone H3 family. In terms of assembly, the nucleosome is a histone octamer containing two molecules each of H2A, H2B, H3 and H4 assembled in one H3-H4 heterotetramer and two H2A-H2B heterodimers. The octamer wraps approximately 147 bp of DNA. Pollen specific.

It localises to the nucleus. The protein resides in the chromosome. Core component of nucleosome. Nucleosomes wrap and compact DNA into chromatin, limiting DNA accessibility to the cellular machineries which require DNA as a template. Histones thereby play a central role in transcription regulation, DNA repair, DNA replication and chromosomal stability. DNA accessibility is regulated via a complex set of post-translational modifications of histones, also called histone code, and nucleosome remodeling. This is Histone H3-like 2 (gcH3) from Lilium longiflorum (Trumpet lily).